A 376-amino-acid polypeptide reads, in one-letter code: tRNA-specific 2-thiouridylase MnmA (376 aa).

ATP contacts are provided by residues 14-21 (GMSGGVDS) and M40. Residues 100–102 (NPD) are interaction with target base in tRNA. C105 (nucleophile) is an active-site residue. A disulfide bridge links C105 with C202. G129 contacts ATP. The interval 152-154 (KDQ) is interaction with tRNA. Catalysis depends on C202, which acts as the Cysteine persulfide intermediate. Residues 315–316 (RY) form an interaction with tRNA region.

This sequence belongs to the MnmA/TRMU family.

The protein localises to the cytoplasm. The catalysed reaction is S-sulfanyl-L-cysteinyl-[protein] + uridine(34) in tRNA + AH2 + ATP = 2-thiouridine(34) in tRNA + L-cysteinyl-[protein] + A + AMP + diphosphate + H(+). Functionally, catalyzes the 2-thiolation of uridine at the wobble position (U34) of tRNA, leading to the formation of s(2)U34. This is tRNA-specific 2-thiouridylase MnmA from Lactococcus lactis subsp. cremoris (strain SK11).